We begin with the raw amino-acid sequence, 265 residues long: 4-hydroxy-2-oxo-heptane-1,7-dioate aldolase (265 aa).

The active-site Proton acceptor is His-45. A substrate-binding site is contributed by Gln-147. Glu-149 provides a ligand contact to a divalent metal cation. Substrate is bound by residues Ala-174 and Asp-175. An a divalent metal cation-binding site is contributed by Asp-175.

Belongs to the HpcH/HpaI aldolase family. Homohexamer; trimer of dimers. The cofactor is a divalent metal cation.

The catalysed reaction is 4-hydroxy-2-oxoheptanedioate = succinate semialdehyde + pyruvate. It functions in the pathway aromatic compound metabolism; 4-hydroxyphenylacetate degradation; pyruvate and succinate semialdehyde from 4-hydroxyphenylacetate: step 7/7. Its function is as follows. Catalyzes the reversible retro-aldol cleavage of 4-hydroxy-2-ketoheptane-1,7-dioate (HKHD) to pyruvate and succinic semialdehyde. This is 4-hydroxy-2-oxo-heptane-1,7-dioate aldolase from Klebsiella pneumoniae subsp. pneumoniae (strain ATCC 700721 / MGH 78578).